We begin with the raw amino-acid sequence, 59 residues long: Photosystem II reaction center protein K (59 aa).

A propeptide spanning residues Met1 to Gly22 is cleaved from the precursor. The chain crosses the membrane as a helical span at residues Phe30–Phe50.

In terms of assembly, PSII is composed of 1 copy each of membrane proteins PsbA, PsbB, PsbC, PsbD, PsbE, PsbF, PsbH, PsbI, PsbJ, PsbK, PsbL, PsbM, PsbT, PsbX, PsbY, PsbZ, Psb30/Ycf12, at least 3 peripheral proteins of the oxygen-evolving complex and a large number of cofactors. It forms dimeric complexes. This protein, PsbL and plastoquinone-9 are found in PSII dimers but not seen in PSII monomers.

Its subcellular location is the plastid. It is found in the chloroplast thylakoid membrane. One of the components of the core complex of photosystem II (PSII). PSII is a light-driven water:plastoquinone oxidoreductase that uses light energy to abstract electrons from H(2)O, generating O(2) and a proton gradient subsequently used for ATP formation. It consists of a core antenna complex that captures photons, and an electron transfer chain that converts photonic excitation into a charge separation. May be involved in PSII dimerization. In terms of biological role, one of the components of the core complex of photosystem II (PSII). PSII is a light-driven water:plastoquinone oxidoreductase that uses light energy to abstract electrons from H(2)O, generating O(2) and a proton gradient subsequently used for ATP formation. It consists of a core antenna complex that captures photons, and an electron transfer chain that converts photonic excitation into a charge separation. This chain is Photosystem II reaction center protein K, found in Spinacia oleracea (Spinach).